Consider the following 366-residue polypeptide: Chorismate synthase (366 aa).

NADP(+) contacts are provided by arginine 48 and arginine 54. Residues 125-127 (RSS), 238-239 (NA), glycine 278, 293-297 (KPTSS), and arginine 319 contribute to the FMN site.

It belongs to the chorismate synthase family. As to quaternary structure, homotetramer. Requires FMNH2 as cofactor.

The catalysed reaction is 5-O-(1-carboxyvinyl)-3-phosphoshikimate = chorismate + phosphate. The protein operates within metabolic intermediate biosynthesis; chorismate biosynthesis; chorismate from D-erythrose 4-phosphate and phosphoenolpyruvate: step 7/7. Its function is as follows. Catalyzes the anti-1,4-elimination of the C-3 phosphate and the C-6 proR hydrogen from 5-enolpyruvylshikimate-3-phosphate (EPSP) to yield chorismate, which is the branch point compound that serves as the starting substrate for the three terminal pathways of aromatic amino acid biosynthesis. This reaction introduces a second double bond into the aromatic ring system. The protein is Chorismate synthase of Chromobacterium violaceum (strain ATCC 12472 / DSM 30191 / JCM 1249 / CCUG 213 / NBRC 12614 / NCIMB 9131 / NCTC 9757 / MK).